A 586-amino-acid polypeptide reads, in one-letter code: Ezrin (586 aa).

The 294-residue stretch at 2 to 295 (PKPINVRVTT…GNHELYMRRR (294 aa)) folds into the FERM domain. Lysine 60 is subject to N6-acetyllysine. Residues 115 to 120 (IYCPPE) carry the [IL]-x-C-x-x-[DE] motif motif. Phosphotyrosine; by PDGFR is present on tyrosine 146. The interaction with SCYL3 stretch occupies residues 244–586 (EIRNISFNDK…KQRIDEFEAM (343 aa)). The stretch at 302 to 462 (VQQMKAQARE…QDDLVKTKEE (161 aa)) forms a coiled coil. Residues 306–338 (KAQAREEKHQKQLERQQLETEKKRRETVEREKE) are disordered. Residues 308–338 (QAREEKHQKQLERQQLETEKKRRETVEREKE) are compositionally biased toward basic and acidic residues. Position 354 is a phosphotyrosine; by PDGFR (tyrosine 354). Serine 366 is modified (phosphoserine). Tyrosine 478 carries the phosphotyrosine modification. The tract at residues 534 to 565 (LSNELSQARDENKRTHNDIIHNENMRQGRDKY) is disordered. Serine 535 carries the post-translational modification Phosphoserine. Basic and acidic residues predominate over residues 540–565 (QARDENKRTHNDIIHNENMRQGRDKY). Threonine 567 is subject to Phosphothreonine; by ROCK2 and PKC/PRKCI.

Interacts with PALS1 and NHERF2. Found in a complex with EZR, PODXL and NHERF2. Interacts with MCC, PLEKHG6, PODXL, SCYL3/PACE1, NHERF1 and TMEM8B. Interacts (when phosphorylated) with FES/FPS. Interacts with dimeric S100P, the interaction may be activating through unmasking of F-actin binding sites. Identified in complexes that contain VIM, EZR, AHNAK, BFSP1, BFSP2, ANK2, PLEC, PRX and spectrin. Detected in a complex composed of at least EZR, AHNAK, PPL and PRX. Interacts with PDPN (via cytoplasmic domain); activates RHOA and promotes epithelial-mesenchymal transition. Interacts with SPN/CD43 cytoplasmic tail. Interacts with CD44 and ICAM2. Interacts with SLC9A3; interaction targets SLC9A3 to the apical membrane. Interacts with SLC9A1; regulates interactions of SLC9A1 with cytoskeletal and promotes stress fiber formation. Interacts with CLIC5; may work together in a complex which also includes RDX and MYO6 to stabilize linkages between the plasma membrane and subjacent actin cytoskeleton at the base of stereocilia. In terms of processing, phosphorylated by tyrosine-protein kinases. Phosphorylation by ROCK2 suppresses the head-to-tail association of the N-terminal and C-terminal halves resulting in an opened conformation which is capable of actin and membrane-binding. S-nitrosylation is induced by interferon-gamma and oxidatively-modified low-densitity lipoprotein (LDL(ox)) possibly implicating the iNOS-S100A8/9 transnitrosylase complex. As to expression, detected in eye lens fiber cells. Expressed in cerebrum and cerebellum (at protein level). Component of the microvilli of intestinal epithelial cells.

It is found in the apical cell membrane. It localises to the cell projection. Its subcellular location is the microvillus membrane. The protein resides in the ruffle membrane. The protein localises to the cytoplasm. It is found in the cell cortex. It localises to the cytoskeleton. Its subcellular location is the microvillus. A head-to-tail association, of the N-terminal and C-terminal halves results in a closed conformation (inactive form) which is incapable of actin or membrane-binding. Its function is as follows. Probably involved in connections of major cytoskeletal structures to the plasma membrane. In epithelial cells, required for the formation of microvilli and membrane ruffles on the apical pole. Along with PLEKHG6, required for normal macropinocytosis. The protein is Ezrin (Ezr) of Mus musculus (Mouse).